Consider the following 438-residue polypeptide: ATP-dependent RNA helicase RhlB (438 aa).

The Q motif motif lies at 9–37 (QRFADLPLHPEVKQALAENGFEFCTPIQA). Positions 40-219 (LPVLLQSKDI…YDHMNEPVKV (180 aa)) constitute a Helicase ATP-binding domain. 53–60 (AQTGTGKT) contributes to the ATP binding site. The DEAD box motif lies at 165–168 (DEAD). Positions 243–390 (KMRLLLTLIE…VSNYDSEALL (148 aa)) constitute a Helicase C-terminal domain. Residues 395-438 (TPAKIHRKHPSGTRNLRDRSGTSRPGAQRSGARPPRHDRTRRHS) are disordered. Positions 428–438 (PPRHDRTRRHS) are enriched in basic residues.

This sequence belongs to the DEAD box helicase family. RhlB subfamily. In terms of assembly, component of the RNA degradosome, which is a multiprotein complex involved in RNA processing and mRNA degradation.

It localises to the cytoplasm. It catalyses the reaction ATP + H2O = ADP + phosphate + H(+). Functionally, DEAD-box RNA helicase involved in RNA degradation. Has RNA-dependent ATPase activity and unwinds double-stranded RNA. The protein is ATP-dependent RNA helicase RhlB of Shewanella baltica (strain OS223).